Consider the following 1158-residue polypeptide: MKIRVELINGNEHRTSSTPQQPQQNPSVSHIFDGETAVKDHIKVLLTHFKIPVDKVSSYALQNPFTLAYVEDSFLTPERLVEAEKSYFILRMKPHAIADRVVDQLTKIEPTSPHIKDTIFNIRYQMKDVEYVEEFIIKGGINQLLAVIIKSRGNTQSYALTALRCFMGYNSGLEEVMSRPQLIDKLYSLVCSVGVLPSVCRQAIELLFCVCNFDGFQLVHRSAKNHAQETSTPAYSNLITLLSSGDMETQLNTLTLFNCLLDNAPNPRKSEKLLSRWQQLGIIKILKSQEHVTHSDFRTQIARFQANSGFGIDGSGRKRTLTRQLSTQELEFQLHQFREQQPLISLLTSELKFLRNAIKSAIENGSYINYRAPTERYDEYSQRKLEMIGDSPTNLQFLKRNDKFTNAFRKSMYVRSPNTSDLFDSSTLEDTYDGNNDTNSCTSISTSSTPIHISQPTTLIVPSTTPNHPPQQSQQTPPLQLQKEKEKEKEKEKEKEKEKEKEQQQQQQQSNKQSTPKPNLSCLLSPITISNTLNNNNNNNNNTNNNIIKSNNNNNNNNCTIKDLSPIVKSEKSNEDEIHEISLNGASSNHEEPIKYKLQPTKSPITPSKRMKPLHWTRILNSQFEGKKTIWNSYLPEVTFEEELFVDLFSLYTERIVSFSGSPVGSGTSISGGGPIKSKPIQKVISVLSQKRSNAIIVMCGKLPSDDILIRAIRNLDSNKLSLDGVSSIISNFPTSEELASIHELHSNEVILDKPERWCLMIDGFPMIKHRLRCWEFMLKIEDSLKSIIESIDTVLLACKELRTSITINCLFSLLLQLGNYLNGGHLYRGQSDGFNLESLSKMIEIKDNSNSGSLLDFAIKTLYQQSPMKGNSNTSIHLELAHVPNASLINFTDVGTSVSKLLQDYSEIVLMSDEIQQTTDKDDPFLDIVPKFMGTILLILKNLQTKFLETEKYLFETIDYFNPTNQTLQQYQQQQYQQYQQQQFQQNIINNNNNNNNNNSNNNNNNISGNTTTTTTTTTTTTTGSIINNNNNNNNNNNNSNNNIINNNNSQSNLQSLLHPQYYLSNSSSSSSSSYKITPPLSSSLSITSQEWNQQKFTCEKFFTLFSTITTAFKKSPSKRLSQKGFGLKISNSDDPMAVIIEALKTGSPNDMVKRAF.

Disordered stretches follow at residues 8–29 (INGN…PSVS), 417–523 (PNTS…LSCL), and 990–1052 (INNN…NNSQ). The 369-residue stretch at 20 to 388 (QQPQQNPSVS…EYSQRKLEMI (369 aa)) folds into the GBD/FH3 domain. Residues 417 to 437 (PNTSDLFDSSTLEDTYDGNND) are compositionally biased toward polar residues. Over residues 438–481 (TNSCTSISTSSTPIHISQPTTLIVPSTTPNHPPQQSQQTPPLQL) the composition is skewed to low complexity. A coiled-coil region spans residues 479-515 (LQLQKEKEKEKEKEKEKEKEKEKEQQQQQQQSNKQST). Over residues 482–503 (QKEKEKEKEKEKEKEKEKEKEQ) the composition is skewed to basic and acidic residues. In terms of domain architecture, FH2 spans 601–998 (TKSPITPSKR…IINNNNNNNN (398 aa)). The DAD domain occupies 1134–1158 (SDDPMAVIIEALKTGSPNDMVKRAF).

This sequence belongs to the formin homology family. Diaphanous subfamily. In terms of assembly, interacts (via GBD/FH3 domain) with activated Rho-GTPases.

The protein resides in the cytoplasm. The protein localises to the cytosol. It is found in the cytoskeleton. Its function is as follows. Formins play an important role in the nucleation of actin and the formation of linear actin filaments. The protein is Formin-C (forC) of Dictyostelium discoideum (Social amoeba).